Here is a 347-residue protein sequence, read N- to C-terminus: NADH-quinone oxidoreductase subunit H (347 aa).

8 consecutive transmembrane segments (helical) span residues 25–45, 95–115, 128–148, 168–188, 200–220, 251–271, 284–304, and 324–344; these read ILFMVVQSLVIFLVVVIVAAM, FMFTLAPAVAMFTALASFAII, IGILFFFAMAGIAVYAVLFGG, ISYEVFLGLSLMGVVALTGSF, GWYIIPQFFGFLTFVVAGVAV, FFIGEYVNVVLISALMTCLFF, FIPPAFWFMIKTLFFMTMFIL, and VCLPVTLINLLVTAAVILIFS.

This sequence belongs to the complex I subunit 1 family. NDH-1 is composed of 14 different subunits. Subunits NuoA, H, J, K, L, M, N constitute the membrane sector of the complex.

It is found in the cell inner membrane. It carries out the reaction a quinone + NADH + 5 H(+)(in) = a quinol + NAD(+) + 4 H(+)(out). Functionally, NDH-1 shuttles electrons from NADH, via FMN and iron-sulfur (Fe-S) centers, to quinones in the respiratory chain. The immediate electron acceptor for the enzyme in this species is believed to be ubiquinone. Couples the redox reaction to proton translocation (for every two electrons transferred, four hydrogen ions are translocated across the cytoplasmic membrane), and thus conserves the redox energy in a proton gradient. This subunit may bind ubiquinone. The polypeptide is NADH-quinone oxidoreductase subunit H (Psychrobacter arcticus (strain DSM 17307 / VKM B-2377 / 273-4)).